Reading from the N-terminus, the 630-residue chain is Peptidyl-prolyl cis-trans isomerase cyp15 (630 aa).

A disordered region spans residues 1–46; that stretch reads MPEDSNTNDNNKRPLEDNNAVDGESDDDIGPMLPPPPGEDAPRKKK. WD repeat units follow at residues 70–108, 113–152, 157–198, 203–242, and 258–301; these read MHRD…IEFV, SHLS…MINM, YKPK…KPLH, MHSK…ALPD, and RKKK…REYD. Residues 475–629 enclose the PPIase cyclophilin-type domain; it reads LGTSAIIRTT…DDIKIINIDI (155 aa).

The protein belongs to the cyclophilin-type PPIase family.

It catalyses the reaction [protein]-peptidylproline (omega=180) = [protein]-peptidylproline (omega=0). Its function is as follows. PPIases accelerate the folding of proteins. It catalyzes the cis-trans isomerization of proline imidic peptide bonds in oligopeptides. The chain is Peptidyl-prolyl cis-trans isomerase cyp15 (cyp15) from Rhizopus delemar (strain RA 99-880 / ATCC MYA-4621 / FGSC 9543 / NRRL 43880) (Mucormycosis agent).